Reading from the N-terminus, the 288-residue chain is THO complex subunit 4D (288 aa).

Residues 1 to 55 (MSGALNMTLDEIVKRGKTARSGGRGISRGRGRGRGGGGRGAGPARRGPLAVNARP) are disordered. An N-acetylserine modification is found at Ser-2. The region spanning 93 to 170 (TRLHVTNLDQ…RPMRLEILGG (78 aa)) is the RRM domain. The interval 201-288 (QGGGGRGRVR…SYHADAMNTS (88 aa)) is disordered. Residues 232 to 260 (QGGGMRGGRGGFRARGRGNGGRGRGGGRG) are compositionally biased toward gly residues. Residues 264 to 281 (KPVEKSAADLDKDLESYH) show a composition bias toward basic and acidic residues.

The protein belongs to the ALYREF family. Interacts with PARP1. Interacts with EIF4A3.

It is found in the nucleus. The protein resides in the nucleoplasm. It localises to the nucleolus. Functionally, export adapter involved in nuclear export of spliced and unspliced mRNA. Plays a role in disease resistance. Mediates multiple defense responses triggered by NEP1, including stomatal closure, hypersensitive cell death (HCD) and defense-related gene expression. The polypeptide is THO complex subunit 4D (Arabidopsis thaliana (Mouse-ear cress)).